Consider the following 178-residue polypeptide: Probable DNA-directed RNA polymerase subunit delta (178 aa).

Residues 14-81 (LSLIDVAHFI…GNNTWGLRAW (68 aa)) enclose the HTH HARE-type domain. Disordered regions lie at residues 88–122 (DEEV…DYDD) and 141–178 (LDED…PEDK). Composition is skewed to acidic residues over residues 105 to 122 (DDED…DYDD), 141 to 150 (LDEDEDDDDH), and 161 to 178 (TVED…PEDK).

Belongs to the RpoE family. In terms of assembly, RNAP is composed of a core of 2 alpha, a beta and a beta' subunits. The core is associated with a delta subunit and one of several sigma factors.

In terms of biological role, participates in both the initiation and recycling phases of transcription. In the presence of the delta subunit, RNAP displays an increased specificity of transcription, a decreased affinity for nucleic acids, and an increased efficiency of RNA synthesis because of enhanced recycling. In Listeria monocytogenes serovar 1/2a (strain ATCC BAA-679 / EGD-e), this protein is Probable DNA-directed RNA polymerase subunit delta.